The sequence spans 259 residues: Hydroxyacylglutathione hydrolase (259 aa).

The Zn(2+) site is built by H56, H58, D60, H61, H112, D133, and H171.

Belongs to the metallo-beta-lactamase superfamily. Glyoxalase II family. In terms of assembly, monomer. Requires Zn(2+) as cofactor.

It catalyses the reaction an S-(2-hydroxyacyl)glutathione + H2O = a 2-hydroxy carboxylate + glutathione + H(+). The protein operates within secondary metabolite metabolism; methylglyoxal degradation; (R)-lactate from methylglyoxal: step 2/2. Its function is as follows. Thiolesterase that catalyzes the hydrolysis of S-D-lactoyl-glutathione to form glutathione and D-lactic acid. This is Hydroxyacylglutathione hydrolase from Pseudomonas entomophila (strain L48).